The sequence spans 181 residues: ATP synthase subunit delta (181 aa).

It belongs to the ATPase delta chain family. In terms of assembly, F-type ATPases have 2 components, F(1) - the catalytic core - and F(0) - the membrane proton channel. F(1) has five subunits: alpha(3), beta(3), gamma(1), delta(1), epsilon(1). F(0) has three main subunits: a(1), b(2) and c(10-14). The alpha and beta chains form an alternating ring which encloses part of the gamma chain. F(1) is attached to F(0) by a central stalk formed by the gamma and epsilon chains, while a peripheral stalk is formed by the delta and b chains.

It localises to the cell membrane. F(1)F(0) ATP synthase produces ATP from ADP in the presence of a proton or sodium gradient. F-type ATPases consist of two structural domains, F(1) containing the extramembraneous catalytic core and F(0) containing the membrane proton channel, linked together by a central stalk and a peripheral stalk. During catalysis, ATP synthesis in the catalytic domain of F(1) is coupled via a rotary mechanism of the central stalk subunits to proton translocation. Functionally, this protein is part of the stalk that links CF(0) to CF(1). It either transmits conformational changes from CF(0) to CF(1) or is implicated in proton conduction. This is ATP synthase subunit delta from Bacillus pumilus (strain SAFR-032).